The sequence spans 72 residues: MSKEDVIEMQGTVLESLPNAMFEVELESGQKILAHISGKLRMNFIRILPGDKVTVELSPYDLTRGRITWRAK.

The region spanning 1–72 is the S1-like domain; that stretch reads MSKEDVIEMQ…TRGRITWRAK (72 aa).

It belongs to the IF-1 family. Component of the 30S ribosomal translation pre-initiation complex which assembles on the 30S ribosome in the order IF-2 and IF-3, IF-1 and N-formylmethionyl-tRNA(fMet); mRNA recruitment can occur at any time during PIC assembly.

Its subcellular location is the cytoplasm. One of the essential components for the initiation of protein synthesis. Stabilizes the binding of IF-2 and IF-3 on the 30S subunit to which N-formylmethionyl-tRNA(fMet) subsequently binds. Helps modulate mRNA selection, yielding the 30S pre-initiation complex (PIC). Upon addition of the 50S ribosomal subunit IF-1, IF-2 and IF-3 are released leaving the mature 70S translation initiation complex. In Clostridium acetobutylicum (strain ATCC 824 / DSM 792 / JCM 1419 / IAM 19013 / LMG 5710 / NBRC 13948 / NRRL B-527 / VKM B-1787 / 2291 / W), this protein is Translation initiation factor IF-1.